The following is a 1115-amino-acid chain: Carbamoyl phosphate synthase large chain (1115 aa).

The segment at 1-407 (MPRRTDLHHV…ALGKVMRSLE (407 aa)) is carboxyphosphate synthetic domain. Residues Arg-134, Arg-174, Gly-180, Gly-181, Glu-213, Ile-215, Glu-220, Gly-246, Val-247, His-248, Gln-290, and Glu-304 each contribute to the ATP site. In terms of domain architecture, ATP-grasp 1 spans 138–333 (KDIVAKAGGE…IAKIAAKLAI (196 aa)). Mg(2+) contacts are provided by Gln-290, Glu-304, and Asn-306. Mn(2+)-binding residues include Gln-290, Glu-304, and Asn-306. Positions 408–559 (TTRAGFWTAP…ELDPAAETEV (152 aa)) are oligomerization domain. The tract at residues 560 to 965 (APQTERPKVL…AFAKSQTAAY (406 aa)) is carbamoyl phosphate synthetic domain. The ATP-grasp 2 domain occupies 693–884 (GDLLSAAGLP…LAKACARIML (192 aa)). 10 residues coordinate ATP: Arg-729, Arg-768, Leu-770, Glu-775, Gly-800, Ile-801, His-802, Ser-803, Gln-843, and Glu-855. The Mg(2+) site is built by Gln-843, Glu-855, and Asn-857. Positions 843, 855, and 857 each coordinate Mn(2+). One can recognise an MGS-like domain in the interval 966-1113 (GSLPAQGTVF…QELHRVIGGV (148 aa)). The tract at residues 966-1115 (GSLPAQGTVF…LHRVIGGVER (150 aa)) is allosteric domain.

The protein belongs to the CarB family. Composed of two chains; the small (or glutamine) chain promotes the hydrolysis of glutamine to ammonia, which is used by the large (or ammonia) chain to synthesize carbamoyl phosphate. Tetramer of heterodimers (alpha,beta)4. It depends on Mg(2+) as a cofactor. Mn(2+) serves as cofactor.

It carries out the reaction hydrogencarbonate + L-glutamine + 2 ATP + H2O = carbamoyl phosphate + L-glutamate + 2 ADP + phosphate + 2 H(+). The enzyme catalyses hydrogencarbonate + NH4(+) + 2 ATP = carbamoyl phosphate + 2 ADP + phosphate + 2 H(+). Its pathway is amino-acid biosynthesis; L-arginine biosynthesis; carbamoyl phosphate from bicarbonate: step 1/1. It functions in the pathway pyrimidine metabolism; UMP biosynthesis via de novo pathway; (S)-dihydroorotate from bicarbonate: step 1/3. In terms of biological role, large subunit of the glutamine-dependent carbamoyl phosphate synthetase (CPSase). CPSase catalyzes the formation of carbamoyl phosphate from the ammonia moiety of glutamine, carbonate, and phosphate donated by ATP, constituting the first step of 2 biosynthetic pathways, one leading to arginine and/or urea and the other to pyrimidine nucleotides. The large subunit (synthetase) binds the substrates ammonia (free or transferred from glutamine from the small subunit), hydrogencarbonate and ATP and carries out an ATP-coupled ligase reaction, activating hydrogencarbonate by forming carboxy phosphate which reacts with ammonia to form carbamoyl phosphate. This chain is Carbamoyl phosphate synthase large chain, found in Mycobacterium tuberculosis (strain CDC 1551 / Oshkosh).